Reading from the N-terminus, the 423-residue chain is G2/mitotic-specific cyclin-B1 (423 aa).

Phosphoserine; by CDK1 is present on Ser-116. Phosphoserine is present on Ser-118. Ser-123 is modified (phosphoserine; by PLK1). Residue Ser-137 is modified to Phosphoserine. Interaction with CDK2 regions lie at residues 159-167 and 248-251; these read EYVKDIYAY and YEEM. Phosphothreonine is present on Thr-311.

Belongs to the cyclin family. Cyclin AB subfamily. In terms of assembly, interacts with the CDC2 protein kinase to form a serine/threonine kinase holoenzyme complex also known as maturation promoting factor (MPF). The cyclin subunit imparts substrate specificity to the complex. Binds HEI10. Interacts with catalytically active RALBP1 and CDC2 during mitosis to form an endocytotic complex during interphase. Interacts with CCNF; interaction is required for nuclear localization. Interacts with CDK5RAP3. Interacts with RFPL4A and UBE2A. Interacts with INCA1. Ubiquitinated by the SCF(NIPA) complex during interphase, leading to its destruction. Deubiquitinated by USP22 during G2/M phase. In terms of processing, phosphorylated by PLK1 at Ser-123 on centrosomes during prophase: phosphorylation by PLK1 does not cause nuclear import. Phosphorylation at Ser-137 was also reported to be mediated by PLK1 but Ser-123 seems to be the primary phosphorylation site.

The protein localises to the cytoplasm. The protein resides in the nucleus. It is found in the cytoskeleton. Its subcellular location is the microtubule organizing center. It localises to the centrosome. Its function is as follows. Essential for the control of the cell cycle at the G2/M (mitosis) transition. This is G2/mitotic-specific cyclin-B1 (Ccnb1) from Rattus norvegicus (Rat).